Here is a 552-residue protein sequence, read N- to C-terminus: uncharacterized protein (552 aa).

Residue G29–S36 participates in ATP binding. Positions R379–P469 constitute a Toprim domain.

This is an uncharacterized protein from Escherichia coli (strain K12).